The chain runs to 551 residues: MGDIAKIHITPETPARPTILNPFESPNDYHRLHESVVPSPSVFKSCKSSSATPAKFKWSIDEMANLLPVEIDPEDIHRQAVFFSQARADSEIEEKRQHAIEQFFTKGAIVPSPWGPLTSKQSMKLPHHKSPLSPLVTEEIQPPKKINAICQTVLSLPVDFNLEKVLGDYYKTEELTEQVQESLSSSSLRRKLFLDGHDSGSESSTPSSPDRNSPSVHPSSRELMSSAIVSPLQCGIPTGTPMSGQFSSSPIQGQCRAYSLGSVTSPMFSERSSPAFKSPILSPIRLQQSVTPESGERKRLSFLSPNCVPKGSSDINMNRSGESPLVEGCSPIRSCSPFQSRPRNRACMWASPAHISPILHPVLHDKENIHITQHLPTMDLDATSTDPHAQQDSLHAESSESEASVAVSEQMEQDELFVKDTGENVETNGKECESDNEDEGENELGEEESCAWVPEEDTASPVRLSSTGTGSVPNAESTHMFLSLLAEGSITPYDTSMQVDSGYNTHSVCTTSLMDTLSSDSQSKEMLDTHTSEESGPFTRHTKPKLFVPPH.

Disordered stretches follow at residues 194–221 (LDGHDSGSESSTPSSPDRNSPSVHPSSR), 379–474 (DLDA…SVPN), and 517–551 (LSSDSQSKEMLDTHTSEESGPFTRHTKPKLFVPPH). A compositionally biased stretch (low complexity) spans 201-215 (SESSTPSSPDRNSPS). Residues 382-393 (ATSTDPHAQQDS) show a composition bias toward polar residues. Residues 416-433 (LFVKDTGENVETNGKECE) are compositionally biased toward basic and acidic residues. Acidic residues predominate over residues 434–458 (SDNEDEGENELGEEESCAWVPEEDT). The span at 463–474 (RLSSTGTGSVPN) shows a compositional bias: polar residues. Over residues 522–533 (QSKEMLDTHTSE) the composition is skewed to basic and acidic residues.

It belongs to the BORA family.

Functionally, required for the activation of aurka at the onset of mitosis. The chain is Protein aurora borealis (bora) from Danio rerio (Zebrafish).